We begin with the raw amino-acid sequence, 352 residues long: C-C chemokine receptor type 5 (352 aa).

Over 1–30 the chain is Extracellular; that stretch reads MDYSMSTALYDIDYGMSEPCQKIDVKQVAA. Y3 bears the Sulfotyrosine mark. The O-linked (GalNAc...) serine glycan is linked to S6. Y10 and Y14 each carry sulfotyrosine. S17 carries an O-linked (GalNAc...) serine glycan. 2 disulfide bridges follow: C20/C269 and C101/C178. Residues 31–58 traverse the membrane as a helical segment; sequence RLLPPLYSLVFIFGFVGNLLVVLILITC. At 59 to 68 the chain is on the cytoplasmic side; that stretch reads KKLKSMTDIY. A helical transmembrane segment spans residues 69–89; that stretch reads LLNLAISDLLFLLTLPLWAHY. The Extracellular portion of the chain corresponds to 90–102; it reads AAAEWDFGGAMCK. The helical transmembrane segment at 103 to 124 threads the bilayer; it reads VFTGMYHMGYFGGIFFIILLTI. Topologically, residues 125–141 are cytoplasmic; the sequence is DRYLAIVHAVFALKART. The helical transmembrane segment at 142 to 166 threads the bilayer; that stretch reads VTFGVVTSGVTWVAAILVSLPDIIF. Residues 167 to 198 are Extracellular-facing; sequence TRSQKEGFRCSCSPHFPASQYQFWKNFHTIMR. Residues 199–218 traverse the membrane as a helical segment; sequence NILSLVLPLLVMIVCYSGIL. Topologically, residues 219-235 are cytoplasmic; it reads KTLLRCRNEKRRHRAVR. Residues 236–260 form a helical membrane-spanning segment; it reads LIFAIMVVYFLFWAPYNVVLLLNTF. At 261–277 the chain is on the extracellular side; it reads QEFFGLNNCSSSNRLDR. The chain crosses the membrane as a helical span at residues 278–301; it reads AMQVTETLGMTHCCINPVVYAFVG. Over 302–352 the chain is Cytoplasmic; sequence EKFRSYLSAFFRKHVAKRLCKHCPLLPRETPEPASSVYTRSTGEQEISVGL. 2 S-palmitoyl cysteine lipidation sites follow: C321 and C324. The interval 332–352 is disordered; that stretch reads PEPASSVYTRSTGEQEISVGL. Phosphoserine; by BARK1 occurs at positions 336, 337, 342, and 349. Residues 337–346 show a composition bias toward polar residues; sequence SVYTRSTGEQ.

The protein belongs to the G-protein coupled receptor 1 family. In terms of assembly, interacts with PRAF2. Efficient ligand binding to CCL3/MIP-1alpha and CCL4/MIP-1beta requires sulfation, O-glycosylation and sialic acid modifications. Glycosylation on Ser-6 is required for efficient binding of CCL4. Interacts with GRK2. Interacts with ARRB1 and ARRB2. Interacts with CNIH4. Interacts with S100A4; this interaction stimulates T-lymphocyte chemotaxis. In terms of processing, sulfated on at least 2 of the N-terminal tyrosines. Sulfation is required for efficient binding of the chemokines, CCL3 and CCL4. O-glycosylated, but not N-glycosylated. Ser-6 appears to be the major site. Also sialylated glycans present which contribute to chemokine binding. Ser-17 may also be glycosylated and, if so, with small moieties such as a T-antigen. Post-translationally, palmitoylation in the C-terminal is important for cell surface expression. In terms of processing, phosphorylation on serine residues in the C-terminal is stimulated by binding CC chemokines especially by APO-RANTES.

The protein localises to the cell membrane. In terms of biological role, receptor for a number of inflammatory CC-chemokines including CCL3/MIP-1-alpha, CCL4/MIP-1-beta and RANTES and subsequently transduces a signal by increasing the intracellular calcium ion level. May play a role in the control of granulocytic lineage proliferation or differentiation. Participates in T-lymphocyte migration to the infection site by acting as a chemotactic receptor. This Oryctolagus cuniculus (Rabbit) protein is C-C chemokine receptor type 5 (CCR5).